A 225-amino-acid polypeptide reads, in one-letter code: Lipoprotein-releasing system ATP-binding protein LolD (225 aa).

An ABC transporter domain is found at Leu5–Asp225. Gly41–Ser48 is an ATP binding site.

Belongs to the ABC transporter superfamily. Lipoprotein translocase (TC 3.A.1.125) family. In terms of assembly, the complex is composed of two ATP-binding proteins (LolD) and two transmembrane proteins (LolC and LolE).

It is found in the cell inner membrane. Its function is as follows. Part of the ABC transporter complex LolCDE involved in the translocation of mature outer membrane-directed lipoproteins, from the inner membrane to the periplasmic chaperone, LolA. Responsible for the formation of the LolA-lipoprotein complex in an ATP-dependent manner. This Geobacter metallireducens (strain ATCC 53774 / DSM 7210 / GS-15) protein is Lipoprotein-releasing system ATP-binding protein LolD.